Consider the following 296-residue polypeptide: Phosphoribosylaminoimidazole-succinocarboxamide synthase (296 aa).

This sequence belongs to the SAICAR synthetase family.

It carries out the reaction 5-amino-1-(5-phospho-D-ribosyl)imidazole-4-carboxylate + L-aspartate + ATP = (2S)-2-[5-amino-1-(5-phospho-beta-D-ribosyl)imidazole-4-carboxamido]succinate + ADP + phosphate + 2 H(+). It participates in purine metabolism; IMP biosynthesis via de novo pathway; 5-amino-1-(5-phospho-D-ribosyl)imidazole-4-carboxamide from 5-amino-1-(5-phospho-D-ribosyl)imidazole-4-carboxylate: step 1/2. This is Phosphoribosylaminoimidazole-succinocarboxamide synthase from Trichlorobacter lovleyi (strain ATCC BAA-1151 / DSM 17278 / SZ) (Geobacter lovleyi).